Here is a 693-residue protein sequence, read N- to C-terminus: Polyribonucleotide nucleotidyltransferase (693 aa).

Mg(2+) contacts are provided by Asp-489 and Asp-495. The region spanning 556–615 (PQIHVMNINPAKIKDVVGRGGATVKGIVEKTGAQIDTSDSGEVKVFAKDKKSMDMAVAMI) is the KH domain. Residues 625–693 (GQVYKGKIVK…GRVKLSLVAR (69 aa)) form the S1 motif domain.

The protein belongs to the polyribonucleotide nucleotidyltransferase family. In terms of assembly, component of the RNA degradosome, which is a multiprotein complex involved in RNA processing and mRNA degradation. Mg(2+) serves as cofactor.

The protein resides in the cytoplasm. It catalyses the reaction RNA(n+1) + phosphate = RNA(n) + a ribonucleoside 5'-diphosphate. In terms of biological role, involved in mRNA degradation. Catalyzes the phosphorolysis of single-stranded polyribonucleotides processively in the 3'- to 5'-direction. The sequence is that of Polyribonucleotide nucleotidyltransferase from Francisella tularensis subsp. tularensis (strain FSC 198).